We begin with the raw amino-acid sequence, 242 residues long: Small ribosomal subunit protein uS3 (242 aa).

Positions 39-110 (IRKFIHKKYG…QVRINVVEVE (72 aa)) constitute a KH type-2 domain. The disordered stretch occupies residues 216-242 (QTMPVGANPRRRASRRPQQFEDRSNEG). Positions 233 to 242 (QQFEDRSNEG) are enriched in basic and acidic residues.

Belongs to the universal ribosomal protein uS3 family. As to quaternary structure, part of the 30S ribosomal subunit. Forms a tight complex with proteins S10 and S14.

Its function is as follows. Binds the lower part of the 30S subunit head. Binds mRNA in the 70S ribosome, positioning it for translation. In Synechococcus sp. (strain CC9902), this protein is Small ribosomal subunit protein uS3.